Reading from the N-terminus, the 215-residue chain is ATP phosphoribosyltransferase (215 aa).

This sequence belongs to the ATP phosphoribosyltransferase family. Short subfamily. In terms of assembly, heteromultimer composed of HisG and HisZ subunits.

It is found in the cytoplasm. It catalyses the reaction 1-(5-phospho-beta-D-ribosyl)-ATP + diphosphate = 5-phospho-alpha-D-ribose 1-diphosphate + ATP. It functions in the pathway amino-acid biosynthesis; L-histidine biosynthesis; L-histidine from 5-phospho-alpha-D-ribose 1-diphosphate: step 1/9. Its function is as follows. Catalyzes the condensation of ATP and 5-phosphoribose 1-diphosphate to form N'-(5'-phosphoribosyl)-ATP (PR-ATP). Has a crucial role in the pathway because the rate of histidine biosynthesis seems to be controlled primarily by regulation of HisG enzymatic activity. The protein is ATP phosphoribosyltransferase of Prochlorococcus marinus (strain MIT 9215).